We begin with the raw amino-acid sequence, 151 residues long: UPF0178 protein PFL_5989 (151 aa).

The protein belongs to the UPF0178 family.

The protein is UPF0178 protein PFL_5989 of Pseudomonas fluorescens (strain ATCC BAA-477 / NRRL B-23932 / Pf-5).